The sequence spans 380 residues: Glycogenin-2 (380 aa).

UDP-binding residues include leucine 10, tyrosine 16, and arginine 95. Residues leucine 10, tyrosine 16, arginine 95, lysine 104, aspartate 120, alanine 121, aspartate 122, asparagine 158, threonine 159, aspartate 185, aspartate 188, and glutamine 189 each contribute to the UDP-alpha-D-glucose site. UDP-binding residues include aspartate 120, alanine 121, and aspartate 122. Aspartate 120 provides a ligand contact to Mn(2+). Aspartate 122 is a Mn(2+) binding site. 2 O-linked (Glc...) tyrosine glycosylation sites follow: tyrosine 230 and tyrosine 232. UDP contacts are provided by histidine 249, glycine 252, and lysine 255. Histidine 249 is a binding site for Mn(2+). UDP-alpha-D-glucose contacts are provided by glycine 252 and lysine 255. The disordered stretch occupies residues 331–355 (SVDRNASQKSTAEKHDIEKPTSKPQ). A compositionally biased stretch (basic and acidic residues) spans 341 to 351 (TAEKHDIEKPT). Tyrosine 367 is a glycosylation site (O-linked (Glc...) tyrosine).

It belongs to the glycosyltransferase 8 family. Glycogenin subfamily. As to quaternary structure, interacts with glycogen synthase GSY2. Mn(2+) is required as a cofactor.

Its subcellular location is the cytoplasm. The protein resides in the vacuole. It catalyses the reaction L-tyrosyl-[glycogenin] + UDP-alpha-D-glucose = alpha-D-glucosyl-L-tyrosyl-[glycogenin] + UDP + H(+). The catalysed reaction is [1,4-alpha-D-glucosyl](n)-L-tyrosyl-[glycogenin] + UDP-alpha-D-glucose = [1,4-alpha-D-glucosyl](n+1)-L-tyrosyl-[glycogenin] + UDP + H(+). In terms of biological role, self-glucosylating initiator of glycogen synthesis. It catalyzes the formation of a short alpha (1,4)-glucosyl chain covalently attached via a glucose 1-O-tyrosyl linkage to internal tyrosine residues and these chains act as primers for the elongation reaction catalyzed by glycogen synthase. Capable of transferring glucosyl residues to unbound acceptors such as free oligoglucans or oligoglucan derivatives. The sequence is that of Glycogenin-2 from Saccharomyces cerevisiae (strain ATCC 204508 / S288c) (Baker's yeast).